We begin with the raw amino-acid sequence, 244 residues long: UPF0280 protein Mhun_0136 (244 aa).

This sequence belongs to the UPF0280 family.

The chain is UPF0280 protein Mhun_0136 from Methanospirillum hungatei JF-1 (strain ATCC 27890 / DSM 864 / NBRC 100397 / JF-1).